The following is a 275-amino-acid chain: Hydroxyethylthiazole kinase (275 aa).

Met50 serves as a coordination point for substrate. Positions 126 and 171 each coordinate ATP. Residue Ala200 participates in substrate binding.

It belongs to the Thz kinase family. Mg(2+) is required as a cofactor.

The enzyme catalyses 5-(2-hydroxyethyl)-4-methylthiazole + ATP = 4-methyl-5-(2-phosphooxyethyl)-thiazole + ADP + H(+). It participates in cofactor biosynthesis; thiamine diphosphate biosynthesis; 4-methyl-5-(2-phosphoethyl)-thiazole from 5-(2-hydroxyethyl)-4-methylthiazole: step 1/1. Its function is as follows. Catalyzes the phosphorylation of the hydroxyl group of 4-methyl-5-beta-hydroxyethylthiazole (THZ). In Acinetobacter baumannii (strain AB307-0294), this protein is Hydroxyethylthiazole kinase.